The chain runs to 170 residues: Small ribosomal subunit protein uS9 (170 aa).

Belongs to the universal ribosomal protein uS9 family.

In Rhodococcus opacus (strain B4), this protein is Small ribosomal subunit protein uS9.